The following is a 251-amino-acid chain: 3-deoxy-manno-octulosonate cytidylyltransferase (251 aa).

The protein belongs to the KdsB family.

It is found in the cytoplasm. It carries out the reaction 3-deoxy-alpha-D-manno-oct-2-ulosonate + CTP = CMP-3-deoxy-beta-D-manno-octulosonate + diphosphate. It functions in the pathway nucleotide-sugar biosynthesis; CMP-3-deoxy-D-manno-octulosonate biosynthesis; CMP-3-deoxy-D-manno-octulosonate from 3-deoxy-D-manno-octulosonate and CTP: step 1/1. The protein operates within bacterial outer membrane biogenesis; lipopolysaccharide biosynthesis. In terms of biological role, activates KDO (a required 8-carbon sugar) for incorporation into bacterial lipopolysaccharide in Gram-negative bacteria. The protein is 3-deoxy-manno-octulosonate cytidylyltransferase of Brucella abortus (strain 2308).